The sequence spans 215 residues: 3-dehydroquinate dehydratase (215 aa).

3-dehydroquinate is bound by residues 27 to 29 and R54; that span reads EVR. H112 (proton donor/acceptor) is an active-site residue. The active-site Schiff-base intermediate with substrate is the K139. Residues R176 and Q198 each contribute to the 3-dehydroquinate site.

This sequence belongs to the type-I 3-dehydroquinase family. In terms of assembly, homodimer.

The catalysed reaction is 3-dehydroquinate = 3-dehydroshikimate + H2O. It participates in metabolic intermediate biosynthesis; chorismate biosynthesis; chorismate from D-erythrose 4-phosphate and phosphoenolpyruvate: step 3/7. Functionally, involved in the third step of the chorismate pathway, which leads to the biosynthesis of aromatic amino acids. Catalyzes the cis-dehydration of 3-dehydroquinate (DHQ) and introduces the first double bond of the aromatic ring to yield 3-dehydroshikimate. The chain is 3-dehydroquinate dehydratase from Thermococcus onnurineus (strain NA1).